A 411-amino-acid polypeptide reads, in one-letter code: 2,3-bisphosphoglycerate-independent phosphoglycerate mutase (411 aa).

This sequence belongs to the BPG-independent phosphoglycerate mutase family. A-PGAM subfamily.

The enzyme catalyses (2R)-2-phosphoglycerate = (2R)-3-phosphoglycerate. It participates in carbohydrate degradation; glycolysis; pyruvate from D-glyceraldehyde 3-phosphate: step 3/5. Functionally, catalyzes the interconversion of 2-phosphoglycerate and 3-phosphoglycerate. The protein is 2,3-bisphosphoglycerate-independent phosphoglycerate mutase of Pyrobaculum islandicum (strain DSM 4184 / JCM 9189 / GEO3).